The sequence spans 312 residues: DNA-directed RNA polymerase subunit alpha (312 aa).

The segment at 1 to 226 is alpha N-terminal domain (alpha-NTD); that stretch reads MIEFEKPNIT…EHFKVFMSTD (226 aa). The tract at residues 243 to 312 is alpha C-terminal domain (alpha-CTD); the sequence is NEKKLEMTIE…ELGLSLRQDD (70 aa).

Belongs to the RNA polymerase alpha chain family. In terms of assembly, homodimer. The RNAP catalytic core consists of 2 alpha, 1 beta, 1 beta' and 1 omega subunit. When a sigma factor is associated with the core the holoenzyme is formed, which can initiate transcription.

The enzyme catalyses RNA(n) + a ribonucleoside 5'-triphosphate = RNA(n+1) + diphosphate. In terms of biological role, DNA-dependent RNA polymerase catalyzes the transcription of DNA into RNA using the four ribonucleoside triphosphates as substrates. The chain is DNA-directed RNA polymerase subunit alpha from Lactobacillus gasseri (strain ATCC 33323 / DSM 20243 / BCRC 14619 / CIP 102991 / JCM 1131 / KCTC 3163 / NCIMB 11718 / NCTC 13722 / AM63).